The following is a 142-amino-acid chain: Small ribosomal subunit protein uS12 (142 aa).

This sequence belongs to the universal ribosomal protein uS12 family. Part of the 30S ribosomal subunit.

Its function is as follows. With S4 and S5 plays an important role in translational accuracy. Located at the interface of the 30S and 50S subunits. This Methanosarcina barkeri (strain Fusaro / DSM 804) protein is Small ribosomal subunit protein uS12.